The following is a 103-amino-acid chain: Small ribosomal subunit protein uS10 (103 aa).

This sequence belongs to the universal ribosomal protein uS10 family. In terms of assembly, part of the 30S ribosomal subunit.

Involved in the binding of tRNA to the ribosomes. This chain is Small ribosomal subunit protein uS10, found in Buchnera aphidicola subsp. Cinara cedri (strain Cc).